An 892-amino-acid polypeptide reads, in one-letter code: Protein BNI4 (892 aa).

Phosphoserine occurs at positions 43 and 133. Disordered stretches follow at residues 185–287 (DFLS…EDTS) and 305–387 (KPVI…QDTE). Basic and acidic residues predominate over residues 208-223 (TILERDNNLPVKREEN). Composition is skewed to polar residues over residues 224 to 236 (TIINSETESTTHS) and 270 to 280 (DSSAQRTTSAG). At S281 the chain carries Phosphoserine. Polar residues predominate over residues 309-335 (GNNSVTNEKNKMSSSSTFSMNIQTSLK). The span at 346 to 356 (SSSSIFNSFLK) shows a compositional bias: low complexity. Positions 357–371 (GKIETSDSPRKEPMR) are enriched in basic and acidic residues. Residues S364 and S394 each carry the phosphoserine modification. T410 carries the post-translational modification Phosphothreonine. Phosphoserine is present on residues S476, S500, and S503. 3 disordered regions span residues 506–526 (RTRSTKSNKRSSMNSQRRSLT), 618–644 (SDEEKTEVERDVPKPREEPLKKDSERQ), and 685–734 (YATE…GDER). S618 carries the post-translational modification Phosphoserine. Residues 624–643 (EVERDVPKPREEPLKKDSER) show a composition bias toward basic and acidic residues. Position 703 is a phosphothreonine (T703). The span at 707-719 (RNNKEDSYKERET) shows a compositional bias: basic and acidic residues. Phosphoserine occurs at positions 746 and 825.

As to quaternary structure, may interact with CHS3 and seems to be an adapter (along with SKT5) to link CHS3 to septins.

This is Protein BNI4 (BNI4) from Saccharomyces cerevisiae (strain ATCC 204508 / S288c) (Baker's yeast).